The sequence spans 471 residues: UDP-glycosyltransferase CGT (471 aa).

The active-site Proton acceptor is H24. H24 lines the an anthocyanidin pocket. Residue D120 is the Charge relay of the active site. T143 lines the UDP-alpha-D-glucose pocket. A UDP region spans residues 280-281; the sequence is SR. UDP-alpha-D-glucose contacts are provided by V343, Q345, H360, W363, N364, S365, and E368. G383 is an an anthocyanidin binding site. Residues D384 and Q385 each contribute to the UDP-alpha-D-glucose site.

This sequence belongs to the UDP-glycosyltransferase family.

It carries out the reaction a 3'-hydro-2'-hydroxy-beta-oxodihydrochalcone + UDP-alpha-D-glucose = a 3'-(beta-D-glucopyranosyl)-2'-hydroxy-beta-oxodihydrochalcone + UDP + H(+). Functionally, UDP-glucose-dependent glucosyltransferase catalyzing the c-glucosylation of 2-hydroxyflavanones. Acts preferentially on the dibenzoylmethane tautomers formed in equilibrium with 2-hydroxyflavanones. No activity with naringenin or naringenin chalcone. In Oryza sativa subsp. indica (Rice), this protein is UDP-glycosyltransferase CGT.